The following is a 179-amino-acid chain: Large ribosomal subunit protein uL5 (179 aa).

The protein belongs to the universal ribosomal protein uL5 family. In terms of assembly, part of the 50S ribosomal subunit; part of the 5S rRNA/L5/L18/L25 subcomplex. Contacts the 5S rRNA and the P site tRNA. Forms a bridge to the 30S subunit in the 70S ribosome.

In terms of biological role, this is one of the proteins that bind and probably mediate the attachment of the 5S RNA into the large ribosomal subunit, where it forms part of the central protuberance. In the 70S ribosome it contacts protein S13 of the 30S subunit (bridge B1b), connecting the 2 subunits; this bridge is implicated in subunit movement. Contacts the P site tRNA; the 5S rRNA and some of its associated proteins might help stabilize positioning of ribosome-bound tRNAs. This Thermoanaerobacter sp. (strain X514) protein is Large ribosomal subunit protein uL5.